The sequence spans 274 residues: Protein YeeZ (274 aa).

Residues 1–24 form the signal peptide; that stretch reads MKKVAIVGLGWLGMPLAMSLSARG. 170–177 lines the ATP pocket; the sequence is GRFFAGKT.

The sequence is that of Protein YeeZ (yeeZ) from Escherichia coli O157:H7.